We begin with the raw amino-acid sequence, 211 residues long: Putative hydrolase SMU_367 (211 aa).

Residues 1–29 (MKKQFLEKAVFTVAATAATVVLGNKMADA) form the signal peptide. Residues 30 to 74 (DTYTLQEGDSFFSVAQRYHMDAYELASMNGKDITSLILPGQTLTV) form the LysM domain. Positions 77–101 (SAAPDNQAAAPTDTTQATTETNDAN) are disordered. A compositionally biased stretch (low complexity) spans 78 to 101 (AAPDNQAAAPTDTTQATTETNDAN). The Peptidase C51 domain maps to 85–209 (AAPTDTTQAT…GTPGSVSYIY (125 aa)).

The polypeptide is Putative hydrolase SMU_367 (Streptococcus mutans serotype c (strain ATCC 700610 / UA159)).